Consider the following 471-residue polypeptide: ATP synthase subunit beta (471 aa).

Gly154–Thr161 provides a ligand contact to ATP.

It belongs to the ATPase alpha/beta chains family. As to quaternary structure, F-type ATPases have 2 components, CF(1) - the catalytic core - and CF(0) - the membrane proton channel. CF(1) has five subunits: alpha(3), beta(3), gamma(1), delta(1), epsilon(1). CF(0) has three main subunits: a(1), b(2) and c(9-12). The alpha and beta chains form an alternating ring which encloses part of the gamma chain. CF(1) is attached to CF(0) by a central stalk formed by the gamma and epsilon chains, while a peripheral stalk is formed by the delta and b chains.

Its subcellular location is the cell membrane. The enzyme catalyses ATP + H2O + 4 H(+)(in) = ADP + phosphate + 5 H(+)(out). In terms of biological role, produces ATP from ADP in the presence of a proton gradient across the membrane. The catalytic sites are hosted primarily by the beta subunits. The polypeptide is ATP synthase subunit beta (Mesomycoplasma hyopneumoniae (strain 7448) (Mycoplasma hyopneumoniae)).